The sequence spans 404 residues: Epoxide hydrolase 1 (404 aa).

The chain crosses the membrane as a helical span at residues 74–96 (ILVRLLQFYYFVKFSAILFLGFA). Positions 140–389 (PLMLFIHGYP…ASHWVQQDEP (250 aa)) constitute an AB hydrolase-1 domain. Catalysis depends on Asp215, which acts as the Nucleophile. Tyr327 (proton donor) is an active-site residue. His382 serves as the catalytic Proton acceptor.

This sequence belongs to the AB hydrolase superfamily. Epoxide hydrolase family.

It localises to the membrane. The enzyme catalyses an epoxide + H2O = an ethanediol. It carries out the reaction 8,9-epoxy-(5Z,11Z,14Z)-eicosatrienoate + H2O = 8,9-dihydroxy-(5Z,11Z,14Z)-eicosatrienoate. It catalyses the reaction 11,12-epoxy-(5Z,8Z,14Z)-eicosatrienoate + H2O = 11,12-dihydroxy-(5Z,8Z,14Z)-eicosatrienoate. The catalysed reaction is 14,15-epoxy-(5Z,8Z,11Z)-eicosatrienoate + H2O = 14,15-dihydroxy-(5Z,8Z,11Z)-eicosatrienoate. The enzyme catalyses 12,13-epoxy-(9Z)-octadecenoate + H2O = 12,13-dihydroxy-(9Z)-octadecenoate. It carries out the reaction 9,10-epoxy-(12Z)-octadecenoate + H2O = 9,10-dihydroxy-(12Z)-octadecenoate. Its pathway is lipid metabolism. Functionally, catalyzes the hydrolysis of epoxide-containing fatty acids. Active against epoxyeicosatrienoic acids (EETs) including 8,9-epoxy-(5Z,11Z,14Z)-eicosatrienoate (8,9-EET), 11,12-epoxy-(5Z,8Z,14Z)-eicosatrienoate (11,12-EET) and 14,15-epoxy-(5Z,8Z,11Z)-eicosatrienoate (14,15-EET) and the linoleic acid metabolites 12,13-epoxy-(9Z)-octadecenoate (12,13-EpOME) and 9,10-epoxy-(12Z)-octadecenoate (9,10-EpOME). These epoxides function as lipid signaling molecules, the enzyme can deplete the supply of the epoxide signal by transforming them into diol species that are more readily eliminated through excretion. The polypeptide is Epoxide hydrolase 1 (Caenorhabditis elegans).